The sequence spans 114 residues: Large ribosomal subunit protein bL20c (114 aa).

The protein belongs to the bacterial ribosomal protein bL20 family.

It is found in the plastid. It localises to the chloroplast. Its function is as follows. Binds directly to 23S ribosomal RNA and is necessary for the in vitro assembly process of the 50S ribosomal subunit. It is not involved in the protein synthesizing functions of that subunit. The polypeptide is Large ribosomal subunit protein bL20c (Tetradesmus obliquus (Green alga)).